Here is a 793-residue protein sequence, read N- to C-terminus: Probable exo-1,4-beta-xylosidase xlnD (793 aa).

The N-terminal stretch at 1 to 20 is a signal peptide; that stretch reads MPRVASVAAVLAALLPSALG. N-linked (GlcNAc...) asparagine glycosylation is found at Asn-23, Asn-87, and Asn-142. Asp-310 is an active-site residue. Asn-326, Asn-385, Asn-404, Asn-440, Asn-477, Asn-518, Asn-559, Asn-614, Asn-652, Asn-679, and Asn-701 each carry an N-linked (GlcNAc...) asparagine glycan.

This sequence belongs to the glycosyl hydrolase 3 family.

The protein resides in the secreted. The catalysed reaction is Hydrolysis of (1-&gt;4)-beta-D-xylans, to remove successive D-xylose residues from the non-reducing termini.. It functions in the pathway glycan degradation; xylan degradation. In terms of biological role, xylan 1,4-beta-xylosidase involved in the hydrolysis of xylan, a major structural heterogeneous polysaccharide found in plant biomass representing the second most abundant polysaccharide in the biosphere, after cellulose. This Aspergillus terreus (strain NIH 2624 / FGSC A1156) protein is Probable exo-1,4-beta-xylosidase xlnD (xlnD).